The primary structure comprises 117 residues: Nuclear transition protein 2 (117 aa).

The tract at residues 1 to 117 (MDTKMQSLPT…KRRSSGRRYK (117 aa)) is disordered. The segment covering 7 to 26 (SLPTTHPHPHSSSRPQSHTS) has biased composition (low complexity). Zn(2+) contacts are provided by H12, H14, H16, H24, C32, C34, C38, and C41. Positions 44–53 (AGHAGSSSSP) are enriched in low complexity. Basic residues-rich tracts occupy residues 60 to 77 (KHPKPSVHSRHSPARPSH) and 93 to 117 (SKRKAVRRRKRTHRAKRRSSGRRYK). The short motif at 90–98 (GKVSKRKAV) is the Nuclear localization signal element. Position 112 is a phosphoserine (S112).

It belongs to the nuclear transition protein 2 family.

The protein localises to the nucleus. The protein resides in the chromosome. Plays a key role in the replacement of histones to protamine in the elongating spermatids of mammals. In condensing spermatids, loaded onto the nucleosomes, where it promotes the recruitment and processing of protamines, which are responsible for histone eviction. The histone H2AB1-H2BC1/TH2B dimer is required for loading of TNP2 onto chromatin. The chain is Nuclear transition protein 2 from Mus musculus (Mouse).